A 367-amino-acid chain; its full sequence is Glutamate 5-kinase (367 aa).

Lys9 is an ATP binding site. Substrate-binding residues include Ser49, Asp136, and Asn148. ATP-binding positions include 168–169 (TD) and 210–216 (TGGMKSK). One can recognise a PUA domain in the interval 276–350 (SGQIEIDAGA…GMQSQHIQAR (75 aa)).

It belongs to the glutamate 5-kinase family.

The protein resides in the cytoplasm. It carries out the reaction L-glutamate + ATP = L-glutamyl 5-phosphate + ADP. It participates in amino-acid biosynthesis; L-proline biosynthesis; L-glutamate 5-semialdehyde from L-glutamate: step 1/2. Its function is as follows. Catalyzes the transfer of a phosphate group to glutamate to form L-glutamate 5-phosphate. The protein is Glutamate 5-kinase of Bacillus cereus (strain ZK / E33L).